Here is a 46-residue protein sequence, read N- to C-terminus: Cytochrome b559 subunit beta (46 aa).

Residues 21 to 37 (WLALHTLGIPTVFFLGA) traverse the membrane as a helical segment. Histidine 25 contributes to the heme binding site.

The protein belongs to the PsbE/PsbF family. Heterodimer of an alpha subunit and a beta subunit. PSII is composed of 1 copy each of membrane proteins PsbA, PsbB, PsbC, PsbD, PsbE, PsbF, PsbH, PsbI, PsbJ, PsbK, PsbL, PsbM, PsbT, PsbX, PsbY, PsbZ, Psb30/Ycf12, peripheral proteins PsbO, CyanoQ (PsbQ), PsbU, PsbV and a large number of cofactors. It forms dimeric complexes. It depends on heme b as a cofactor.

Its subcellular location is the cellular thylakoid membrane. This b-type cytochrome is tightly associated with the reaction center of photosystem II (PSII). PSII is a light-driven water:plastoquinone oxidoreductase that uses light energy to abstract electrons from H(2)O, generating O(2) and a proton gradient subsequently used for ATP formation. It consists of a core antenna complex that captures photons, and an electron transfer chain that converts photonic excitation into a charge separation. This Synechococcus sp. (strain CC9605) protein is Cytochrome b559 subunit beta.